Here is a 145-residue protein sequence, read N- to C-terminus: Large ribosomal subunit protein uL11 (145 aa).

It belongs to the universal ribosomal protein uL11 family. Part of the ribosomal stalk of the 50S ribosomal subunit. Interacts with L10 and the large rRNA to form the base of the stalk. L10 forms an elongated spine to which L12 dimers bind in a sequential fashion forming a multimeric L10(L12)X complex. In terms of processing, one or more lysine residues are methylated.

Its function is as follows. Forms part of the ribosomal stalk which helps the ribosome interact with GTP-bound translation factors. This Flavobacterium johnsoniae (strain ATCC 17061 / DSM 2064 / JCM 8514 / BCRC 14874 / CCUG 350202 / NBRC 14942 / NCIMB 11054 / UW101) (Cytophaga johnsonae) protein is Large ribosomal subunit protein uL11.